Consider the following 144-residue polypeptide: Protein WAP-3 (144 aa).

An N-terminal signal peptide occupies residues 1 to 21; it reads MRSRSFLVLVAVFLICETLVA. The interval 28–49 is disordered; sequence RGPKGQGQDPVEGQDQDEGQGP. G34 is a region of interest (8 X 6 AA approximate tandem repeats). A run of 8 repeats spans residues 34-39, 40-45, 46-51, 58-63, 64-69, 70-75, 76-81, and 82-87. Positions 64-85 are disordered; that stretch reads GQDPVEGQDPVKAQLPDKVQDP. The region spanning 97 to 144 is the WAP domain; that stretch reads LFPKPGVCPKIIFCPLVNPPIKCWRDSHCPGVKKCCPSLCGKGCVTPR. Intrachain disulfides connect C104–C132, C110–C136, C119–C131, and C125–C140.

In terms of tissue distribution, large intestine (relatively low levels).

This is Protein WAP-3 from Sus scrofa (Pig).